Here is a 444-residue protein sequence, read N- to C-terminus: Phosphoglucosamine mutase (444 aa).

The Phosphoserine intermediate role is filled by serine 103. 4 residues coordinate Mg(2+): serine 103, aspartate 242, aspartate 244, and aspartate 246. Residue serine 103 is modified to Phosphoserine.

It belongs to the phosphohexose mutase family. The cofactor is Mg(2+). Activated by phosphorylation.

The catalysed reaction is alpha-D-glucosamine 1-phosphate = D-glucosamine 6-phosphate. In terms of biological role, catalyzes the conversion of glucosamine-6-phosphate to glucosamine-1-phosphate. The protein is Phosphoglucosamine mutase of Hydrogenovibrio crunogenus (strain DSM 25203 / XCL-2) (Thiomicrospira crunogena).